Reading from the N-terminus, the 441-residue chain is N-acetyl-S-(2-succino)cysteine monooxygenase (441 aa).

The FMN site is built by Asp-59, Thr-96, His-146, Tyr-150, Ser-220, and Ser-221.

Belongs to the NtaA/SnaA/DszA monooxygenase family. As to quaternary structure, homodimer. FMN serves as cofactor.

The enzyme catalyses N-acetyl-S-(2-succino)-L-cysteine + NADH + O2 + H(+) = N-acetyl-L-cysteine + oxaloacetate + NAD(+) + H2O. Its pathway is amino-acid biosynthesis; L-cysteine biosynthesis. Its function is as follows. Catalyzes the oxidative cleavage of the C-S bond of N-acetyl-S-(2-succino)cysteine, forming oxaloacetate and N-acetylcysteine (NAC). Is involved in a S-(2-succino)cysteine (2SC) degradation pathway that allows B.subtilis to grow on 2SC as a sole sulfur source, via its metabolization to cysteine. Shows almost no activity on S-succinylglutathione and 2SC. This is N-acetyl-S-(2-succino)cysteine monooxygenase from Bacillus subtilis (strain 168).